The following is a 135-amino-acid chain: Large ribosomal subunit protein mL54 (135 aa).

Residues 1–14 (MAAAHLLRASRVWA) constitute a mitochondrion transit peptide.

The protein belongs to the mitochondrion-specific ribosomal protein mL54 family. As to quaternary structure, component of the mitochondrial ribosome large subunit (39S) which comprises a 16S rRNA and about 50 distinct proteins.

The protein resides in the mitochondrion. This is Large ribosomal subunit protein mL54 (Mrpl54) from Mus musculus (Mouse).